Reading from the N-terminus, the 562-residue chain is Formate--tetrahydrofolate ligase (562 aa).

Threonine 70 to serine 77 is a binding site for ATP.

This sequence belongs to the formate--tetrahydrofolate ligase family.

It carries out the reaction (6S)-5,6,7,8-tetrahydrofolate + formate + ATP = (6R)-10-formyltetrahydrofolate + ADP + phosphate. Its pathway is one-carbon metabolism; tetrahydrofolate interconversion. This chain is Formate--tetrahydrofolate ligase, found in Paenarthrobacter aurescens (strain TC1).